The chain runs to 466 residues: Histidine--tRNA ligase (466 aa).

The protein belongs to the class-II aminoacyl-tRNA synthetase family. As to quaternary structure, homodimer.

The protein localises to the cytoplasm. It catalyses the reaction tRNA(His) + L-histidine + ATP = L-histidyl-tRNA(His) + AMP + diphosphate + H(+). The sequence is that of Histidine--tRNA ligase (hisS) from Xylella fastidiosa (strain 9a5c).